The sequence spans 427 residues: UPF0597 protein CPR_0790 (427 aa).

It belongs to the UPF0597 family.

The chain is UPF0597 protein CPR_0790 from Clostridium perfringens (strain SM101 / Type A).